Here is a 37-residue protein sequence, read N- to C-terminus: Cytochrome b6-f complex subunit 5 (37 aa).

Residues 5–25 (LLSGIVLGLMPVTLAGLFTTA) traverse the membrane as a helical segment.

Belongs to the PetG family. In terms of assembly, the 4 large subunits of the cytochrome b6-f complex are cytochrome b6, subunit IV (17 kDa polypeptide, PetD), cytochrome f and the Rieske protein, while the 4 small subunits are PetG, PetL, PetM and PetN. The complex functions as a dimer.

It is found in the plastid. The protein resides in the chloroplast thylakoid membrane. Its function is as follows. Component of the cytochrome b6-f complex, which mediates electron transfer between photosystem II (PSII) and photosystem I (PSI), cyclic electron flow around PSI, and state transitions. PetG is required for either the stability or assembly of the cytochrome b6-f complex. The protein is Cytochrome b6-f complex subunit 5 of Ostreococcus tauri.